A 601-amino-acid polypeptide reads, in one-letter code: Translation initiation factor IF-2 (601 aa).

Residues 54 to 101 are disordered; sequence GHTASAEPAPAQASGSPASPAQTEAQEAPQPTATATAEREPAAPPARE. Over residues 57–89 the composition is skewed to low complexity; the sequence is ASAEPAPAQASGSPASPAQTEAQEAPQPTATAT. The tr-type G domain maps to 104–273; sequence HRAPVVTIMG…SLTAELEDLR (170 aa). The G1 stretch occupies residues 113 to 120; that stretch reads GHVDHGKT. Position 113–120 (113–120) interacts with GTP; that stretch reads GHVDHGKT. Positions 138–142 are G2; sequence GITQH. A G3 region spans residues 159–162; it reads DTPG. GTP contacts are provided by residues 159–163 and 213–216; these read DTPGH and NKVD. The segment at 213 to 216 is G4; sequence NKVD. The tract at residues 249 to 251 is G5; sequence SAK.

It belongs to the TRAFAC class translation factor GTPase superfamily. Classic translation factor GTPase family. IF-2 subfamily.

The protein localises to the cytoplasm. One of the essential components for the initiation of protein synthesis. Protects formylmethionyl-tRNA from spontaneous hydrolysis and promotes its binding to the 30S ribosomal subunits. Also involved in the hydrolysis of GTP during the formation of the 70S ribosomal complex. This chain is Translation initiation factor IF-2, found in Deinococcus geothermalis (strain DSM 11300 / CIP 105573 / AG-3a).